The chain runs to 208 residues: ATP-dependent Clp protease proteolytic subunit (208 aa).

The active-site Nucleophile is Ser-106. The active site involves His-131.

It belongs to the peptidase S14 family. As to quaternary structure, fourteen ClpP subunits assemble into 2 heptameric rings which stack back to back to give a disk-like structure with a central cavity, resembling the structure of eukaryotic proteasomes.

It localises to the cytoplasm. The enzyme catalyses Hydrolysis of proteins to small peptides in the presence of ATP and magnesium. alpha-casein is the usual test substrate. In the absence of ATP, only oligopeptides shorter than five residues are hydrolyzed (such as succinyl-Leu-Tyr-|-NHMec, and Leu-Tyr-Leu-|-Tyr-Trp, in which cleavage of the -Tyr-|-Leu- and -Tyr-|-Trp bonds also occurs).. In terms of biological role, cleaves peptides in various proteins in a process that requires ATP hydrolysis. Has a chymotrypsin-like activity. Plays a major role in the degradation of misfolded proteins. The polypeptide is ATP-dependent Clp protease proteolytic subunit (Roseobacter denitrificans (strain ATCC 33942 / OCh 114) (Erythrobacter sp. (strain OCh 114))).